The primary structure comprises 79 residues: Large ribosomal subunit protein uL29 (79 aa).

The protein belongs to the universal ribosomal protein uL29 family.

This Tropheryma whipplei (strain Twist) (Whipple's bacillus) protein is Large ribosomal subunit protein uL29.